The sequence spans 324 residues: MTAHLKKAELHCHIEGATPPELALRQARKYSVDTSAIIRDKAYVWEDFTSFVRCYDSVASLFRTQGDYALLAETYLTELAEAGTIYSEIIVSPDHGNTIGLGADAYLEGLAAGMEAAKAKTGIESRMLITGIRHLGPESVAKTAEYAAMRRHPLVTGFNLAGEERMHSVAEFARAFDIVRDAGLGLTIHAGELSGAFSVRDALDHVRPARISHGVRAIEDADLVKRLAEEGVVLEVCPGSNVSLQVFADFASHPLRPLYEAGVRVTLNSDDPPFFHTSLAQEYEVAAHVMGFSDSDIDRMTKTAIEAAFVDEPTRERLLAALHV.

H11, H13, and H189 together coordinate Zn(2+). E192 functions as the Proton donor in the catalytic mechanism. D270 lines the Zn(2+) pocket. D271 contacts substrate.

The protein belongs to the metallo-dependent hydrolases superfamily. Adenosine and AMP deaminases family. Adenine deaminase type 2 subfamily. Zn(2+) is required as a cofactor.

The catalysed reaction is adenine + H2O + H(+) = hypoxanthine + NH4(+). In terms of biological role, catalyzes the hydrolytic deamination of adenine to hypoxanthine. Plays an important role in the purine salvage pathway and in nitrogen catabolism. This Sinorhizobium fredii (strain NBRC 101917 / NGR234) protein is Adenine deaminase.